A 245-amino-acid polypeptide reads, in one-letter code: Probable 2-phosphosulfolactate phosphatase (245 aa).

It belongs to the ComB family. It depends on Mg(2+) as a cofactor.

The catalysed reaction is (2R)-O-phospho-3-sulfolactate + H2O = (2R)-3-sulfolactate + phosphate. The sequence is that of Probable 2-phosphosulfolactate phosphatase from Trichormus variabilis (strain ATCC 29413 / PCC 7937) (Anabaena variabilis).